A 76-amino-acid chain; its full sequence is KANTR integral membrane protein (76 aa).

Residues 1–25 (MSPFSLLILVICAFSLFFLINLSRG) form the signal peptide. Topologically, residues 26–34 (LSILLVFTK) are extracellular. The chain crosses the membrane as a helical span at residues 35-55 (NQLLALLLLSIVSLFSISLIS). Over 56–76 (ALIFFDLLPSTFFGFILLLFF) the chain is Cytoplasmic.

The protein resides in the membrane. The sequence is that of KANTR integral membrane protein from Mus musculus (Mouse).